A 46-amino-acid polypeptide reads, in one-letter code: PhoP/PhoQ regulator MgrB (46 aa).

Residues 6-26 traverse the membrane as a helical segment; the sequence is WVALVVVVLACLLLWAQVFNM.

The protein belongs to the MgrB family. May form homooligomers. Probably interacts with the periplasmic domain of PhoQ.

It localises to the cell inner membrane. Its function is as follows. PhoP-regulated transcription is redox-sensitive, being activated when the periplasm becomes more reducing. MgrB acts between DsbA/DsbB and PhoP/PhoQ in this pathway. Represses PhoP/PhoQ signaling, possibly by binding to the periplasmic domain of PhoQ, altering its activity and that of downstream effector PhoP. This Escherichia coli O6:K15:H31 (strain 536 / UPEC) protein is PhoP/PhoQ regulator MgrB.